The primary structure comprises 309 residues: Homoserine O-acetyltransferase (309 aa).

The active-site Acyl-thioester intermediate is the Cys148. Residues Lys169 and Ser198 each contribute to the substrate site. His241 (proton acceptor) is an active-site residue. Glu243 is a catalytic residue. Arg255 contacts substrate.

It belongs to the MetA family.

It localises to the cytoplasm. The catalysed reaction is L-homoserine + acetyl-CoA = O-acetyl-L-homoserine + CoA. It functions in the pathway amino-acid biosynthesis; L-methionine biosynthesis via de novo pathway; O-acetyl-L-homoserine from L-homoserine: step 1/1. Functionally, transfers an acetyl group from acetyl-CoA to L-homoserine, forming acetyl-L-homoserine. In vitro, can also use propionyl-CoA as acyl donor. This is Homoserine O-acetyltransferase from Shouchella clausii (Alkalihalobacillus clausii).